The chain runs to 155 residues: Aspartate carbamoyltransferase regulatory chain (155 aa).

Zn(2+)-binding residues include cysteine 113, cysteine 118, cysteine 139, and cysteine 142.

This sequence belongs to the PyrI family. As to quaternary structure, contains catalytic and regulatory chains. Zn(2+) serves as cofactor.

Its function is as follows. Involved in allosteric regulation of aspartate carbamoyltransferase. The chain is Aspartate carbamoyltransferase regulatory chain from Methanospirillum hungatei JF-1 (strain ATCC 27890 / DSM 864 / NBRC 100397 / JF-1).